The sequence spans 354 residues: UPF0283 protein YcjF (354 aa).

A run of 3 helical transmembrane segments spans residues 71–91 (MVTV…VQWV), 101–121 (IALG…GSVV), and 214–234 (ESAL…FIAW).

It belongs to the UPF0283 family.

It localises to the cell inner membrane. In Yersinia enterocolitica, this protein is UPF0283 protein YcjF (ycjF).